The chain runs to 197 residues: Small ribosomal subunit protein uS4B (197 aa).

Residues 88–150 (SRLDNMVYRM…SRKTEMFVNN (63 aa)) enclose the S4 RNA-binding domain.

This sequence belongs to the universal ribosomal protein uS4 family. In terms of assembly, part of the 30S ribosomal subunit. Contacts protein S5. The interaction surface between S4 and S5 is involved in control of translational fidelity.

In terms of biological role, one of the primary rRNA binding proteins, it binds directly to 16S rRNA where it nucleates assembly of the body of the 30S subunit. Functionally, with S5 and S12 plays an important role in translational accuracy. This Clostridium perfringens (strain SM101 / Type A) protein is Small ribosomal subunit protein uS4B.